Here is a 353-residue protein sequence, read N- to C-terminus: Photosystem II protein D1 (353 aa).

At Thr2 the chain carries N-acetylthreonine. Thr2 is modified (phosphothreonine). 3 helical membrane passes run 29 to 46, 118 to 133, and 142 to 156; these read YIGW…TATS, HFLL…EWEL, and WIAV…AATA. Chlorophyll a is bound at residue His118. Tyr126 is a pheophytin a binding site. [CaMn4O5] cluster is bound by residues Asp170 and Glu189. The chain crosses the membrane as a helical span at residues 197 to 218; the sequence is FHMLGVAGVFGGSLFSAMHGSL. Residue His198 coordinates chlorophyll a. A quinone is bound by residues His215 and 264–265; that span reads SF. Fe cation is bound at residue His215. His272 provides a ligand contact to Fe cation. The chain crosses the membrane as a helical span at residues 274–288; the sequence is FLAAWPVVGIWFTAL. Residues His332, Glu333, Asp342, and Ala344 each coordinate [CaMn4O5] cluster. Residues 345–353 constitute a propeptide that is removed on maturation; it reads ALEVPSLNG.

Belongs to the reaction center PufL/M/PsbA/D family. In terms of assembly, PSII is composed of 1 copy each of membrane proteins PsbA, PsbB, PsbC, PsbD, PsbE, PsbF, PsbH, PsbI, PsbJ, PsbK, PsbL, PsbM, PsbT, PsbX, PsbY, PsbZ, Psb30/Ycf12, at least 3 peripheral proteins of the oxygen-evolving complex and a large number of cofactors. It forms dimeric complexes. Requires The D1/D2 heterodimer binds P680, chlorophylls that are the primary electron donor of PSII, and subsequent electron acceptors. It shares a non-heme iron and each subunit binds pheophytin, quinone, additional chlorophylls, carotenoids and lipids. D1 provides most of the ligands for the Mn4-Ca-O5 cluster of the oxygen-evolving complex (OEC). There is also a Cl(-1) ion associated with D1 and D2, which is required for oxygen evolution. The PSII complex binds additional chlorophylls, carotenoids and specific lipids. as cofactor. In terms of processing, tyr-161 forms a radical intermediate that is referred to as redox-active TyrZ, YZ or Y-Z. C-terminally processed by CTPA; processing is essential to allow assembly of the oxygen-evolving complex and thus photosynthetic growth.

The protein localises to the plastid. It is found in the chloroplast thylakoid membrane. It carries out the reaction 2 a plastoquinone + 4 hnu + 2 H2O = 2 a plastoquinol + O2. Photosystem II (PSII) is a light-driven water:plastoquinone oxidoreductase that uses light energy to abstract electrons from H(2)O, generating O(2) and a proton gradient subsequently used for ATP formation. It consists of a core antenna complex that captures photons, and an electron transfer chain that converts photonic excitation into a charge separation. The D1/D2 (PsbA/PsbD) reaction center heterodimer binds P680, the primary electron donor of PSII as well as several subsequent electron acceptors. The chain is Photosystem II protein D1 from Oryza nivara (Indian wild rice).